We begin with the raw amino-acid sequence, 417 residues long: Serine hydroxymethyltransferase (417 aa).

(6S)-5,6,7,8-tetrahydrofolate-binding positions include Leu-122 and 126–128; that span reads GHL. N6-(pyridoxal phosphate)lysine is present on Lys-230. Residue 355-357 participates in (6S)-5,6,7,8-tetrahydrofolate binding; sequence SPF.

The protein belongs to the SHMT family. As to quaternary structure, homodimer. Pyridoxal 5'-phosphate is required as a cofactor.

The protein localises to the cytoplasm. The catalysed reaction is (6R)-5,10-methylene-5,6,7,8-tetrahydrofolate + glycine + H2O = (6S)-5,6,7,8-tetrahydrofolate + L-serine. Its pathway is one-carbon metabolism; tetrahydrofolate interconversion. It participates in amino-acid biosynthesis; glycine biosynthesis; glycine from L-serine: step 1/1. Its function is as follows. Catalyzes the reversible interconversion of serine and glycine with tetrahydrofolate (THF) serving as the one-carbon carrier. This reaction serves as the major source of one-carbon groups required for the biosynthesis of purines, thymidylate, methionine, and other important biomolecules. Also exhibits THF-independent aldolase activity toward beta-hydroxyamino acids, producing glycine and aldehydes, via a retro-aldol mechanism. The sequence is that of Serine hydroxymethyltransferase from Francisella tularensis subsp. holarctica (strain LVS).